The sequence spans 130 residues: uncharacterized protein (130 aa).

The interval Asp-41–Glu-64 is disordered.

This is an uncharacterized protein from Streptococcus pyogenes serotype M6 (strain ATCC BAA-946 / MGAS10394).